The sequence spans 122 residues: Protein YqjC (122 aa).

An N-terminal signal peptide occupies residues 1–20 (MKYRIALAVSLFALSAGSYA). A disordered region spans residues 65–100 (QLRADHQKKIAKQKDEVAERQQDLAEAKQKGDADKI). Positions 66–100 (LRADHQKKIAKQKDEVAERQQDLAEAKQKGDADKI) are enriched in basic and acidic residues.

This is Protein YqjC (yqjC) from Escherichia coli (strain K12).